A 356-amino-acid chain; its full sequence is CLIP domain-containing serine protease C9 (356 aa).

Residues 49–94 enclose the Clip domain; it reads SCDTPQVIGGKCMNISLCDPAFVHSIAYQEHTPVCQQNAFYRVICC. 4 disulfides stabilise this stretch: C50–C93, C60–C83, C66–C94, and C139–C155. N62 carries an N-linked (GlcNAc...) asparagine glycan. The Peptidase S1 domain occupies 109–351; that stretch reads IMHGIEAEPG…YFGWIKETVS (243 aa). Residues H154 and D194 each act as charge relay system in the active site. An intrachain disulfide couples C258 to C284. A glycan (N-linked (GlcNAc...) asparagine) is linked at N292. C300 and C328 form a disulfide bridge. The active-site Charge relay system is the S304.

Belongs to the peptidase S1 family. CLIP subfamily. As to quaternary structure, in the active form, heterodimer of a p12 subunit and a p30 subunit; disulfide-linked. Post-translationally, secreted as a full-length protein. Following bacterium E.coli infection, proteolytically cleaved into two chains, p12 and p30, which remain covalently linked.

Its subcellular location is the secreted. Its function is as follows. Probable serine protease which plays an essential role in the innate immune response against bacteria and protozoa infection by activating the melanization cascade. In the susceptible strain G3, appears to be dispensable for ookinete elimination which occurs by lysis. The protein is CLIP domain-containing serine protease C9 of Anopheles gambiae (African malaria mosquito).